The chain runs to 401 residues: Forkhead box protein H1 (401 aa).

Residues 32–57 (MGPRDNSQLRPPEAESLSKTPKRRKK) are disordered. Positions 64 to 163 (KPPYTYLAMI…QNTALCRRWQ (100 aa)) form a DNA-binding region, fork-head. The disordered stretch occupies residues 179-251 (VLHGQPYQPP…PSSSSETPLW (73 aa)). Over residues 185-195 (YQPPSPPPPPR) the composition is skewed to pro residues. Residues 221–230 (GQSTAAQAGT) are compositionally biased toward polar residues. The SMAD-interaction domain (SID) stretch occupies residues 307-390 (LWGQLPTSYL…VSHPRDLAAP (84 aa)). The Fast/FoxH1 motif 1 (FM1) signature appears at 311–315 (LPTSY). The Fast/FoxH1 motif 2 (FM2) signature appears at 321 to 327 (PNVVMPL). Residues 363 to 384 (LDSLFQGVPPNKSIYDVWVSHP) carry the SMAD interaction motif (SIM) motif.

In terms of assembly, interacts with the MH2 domains of SMAD2 and SMAD3.

It is found in the nucleus. Its function is as follows. Transcriptional activator. Recognizes and binds to the DNA sequence 5'-TGT[GT][GT]ATT-3'. Required for induction of the goosecoid (GSC) promoter by TGF-beta or activin signaling. Forms a transcriptionally active complex containing FOXH1/SMAD2/SMAD4 on a site on the GSC promoter called TARE (TGF-beta/activin response element). In Mus musculus (Mouse), this protein is Forkhead box protein H1 (Foxh1).